Here is a 272-residue protein sequence, read N- to C-terminus: GTP cyclohydrolase FolE2 (272 aa).

The protein belongs to the GTP cyclohydrolase IV family.

The catalysed reaction is GTP + H2O = 7,8-dihydroneopterin 3'-triphosphate + formate + H(+). It participates in cofactor biosynthesis; 7,8-dihydroneopterin triphosphate biosynthesis; 7,8-dihydroneopterin triphosphate from GTP: step 1/1. Its function is as follows. Converts GTP to 7,8-dihydroneopterin triphosphate. In Polynucleobacter asymbioticus (strain DSM 18221 / CIP 109841 / QLW-P1DMWA-1) (Polynucleobacter necessarius subsp. asymbioticus), this protein is GTP cyclohydrolase FolE2.